Here is a 252-residue protein sequence, read N- to C-terminus: Proteasome subunit alpha 1 (252 aa).

N-acetylmethionine; alternate is present on M1.

It belongs to the peptidase T1A family. In terms of assembly, the 20S proteasome core is composed of 14 alpha and 14 beta subunits that assemble into four stacked heptameric rings, resulting in a barrel-shaped structure. The two inner rings, each composed of seven catalytic beta subunits, are sandwiched by two outer rings, each composed of seven alpha subunits. H.volcanii produces at least 2 types of 20S proteasomes: an alpha1-beta proteasome and a proteasome containing all three subunits (alpha1, alpha2, and beta) that appears to be asymmetrical with homo-oligomeric alpha1 and alpha2 rings positioned on separate ends. The catalytic chamber with the active sites is on the inside of the barrel. Has probably a gated structure, the ends of the cylinder being occluded by the N-termini of the alpha-subunits. Is likely capped at one or both ends by the proteasome regulatory ATPase, PAN. In terms of processing, acetylated. The acetylated form at Met-1 was shown to be in 100-fold excess of the unacetylated form with the initiator methionine removed in whole cells and purified 20S proteasomes.

Its subcellular location is the cytoplasm. With respect to regulation, the formation of the proteasomal ATPase PAN-20S proteasome complex, via the docking of the C-termini of PAN into the intersubunit pockets in the alpha-rings, triggers opening of the gate for substrate entry. Interconversion between the open-gate and close-gate conformations leads to a dynamic regulation of the 20S proteasome proteolysis activity. In vitro, the chymotrypsin-like activity of the alpha1-beta proteasome is potently inhibited by carbobenzoxyl-leucinyl-leucinyl-leucinal-H (MG132) and significantly by N-acetyl-leucinyl-leucinyl-norleucinal-H (calpain inhibitor I). Functionally, component of the proteasome core, a large protease complex with broad specificity involved in protein degradation. The H.volcanii alpha1-beta proteasome is able to cleave oligopeptides after Phe, Tyr and Trp, poorly after Glu but not after Arg. Thus, displays chymotrypsin-like activity, low caspase-like activity but no trypsin-like activity. The protein is Proteasome subunit alpha 1 of Haloferax volcanii (strain ATCC 29605 / DSM 3757 / JCM 8879 / NBRC 14742 / NCIMB 2012 / VKM B-1768 / DS2) (Halobacterium volcanii).